The sequence spans 143 residues: NADH-quinone oxidoreductase subunit A (143 aa).

Transmembrane regions (helical) follow at residues glycine 7–leucine 27, phenylalanine 63–tryptophan 83, and phenylalanine 93–tryptophan 113.

It belongs to the complex I subunit 3 family. As to quaternary structure, NDH-1 is composed of 14 different subunits. Subunits NuoA, H, J, K, L, M, N constitute the membrane sector of the complex.

The protein resides in the cell inner membrane. The enzyme catalyses a quinone + NADH + 5 H(+)(in) = a quinol + NAD(+) + 4 H(+)(out). In terms of biological role, NDH-1 shuttles electrons from NADH, via FMN and iron-sulfur (Fe-S) centers, to quinones in the respiratory chain. The immediate electron acceptor for the enzyme in this species is believed to be a menaquinone. Couples the redox reaction to proton translocation (for every two electrons transferred, four hydrogen ions are translocated across the cytoplasmic membrane), and thus conserves the redox energy in a proton gradient. This chain is NADH-quinone oxidoreductase subunit A, found in Chlorobium limicola (strain DSM 245 / NBRC 103803 / 6330).